Consider the following 427-residue polypeptide: Light-independent protochlorophyllide reductase subunit N (427 aa).

Positions 28, 53, and 114 each coordinate [4Fe-4S] cluster.

It belongs to the BchN/ChlN family. As to quaternary structure, protochlorophyllide reductase is composed of three subunits; BchL, BchN and BchB. Forms a heterotetramer of two BchB and two BchN subunits. [4Fe-4S] cluster serves as cofactor.

The enzyme catalyses chlorophyllide a + oxidized 2[4Fe-4S]-[ferredoxin] + 2 ADP + 2 phosphate = protochlorophyllide a + reduced 2[4Fe-4S]-[ferredoxin] + 2 ATP + 2 H2O. Its pathway is porphyrin-containing compound metabolism; bacteriochlorophyll biosynthesis (light-independent). In terms of biological role, component of the dark-operative protochlorophyllide reductase (DPOR) that uses Mg-ATP and reduced ferredoxin to reduce ring D of protochlorophyllide (Pchlide) to form chlorophyllide a (Chlide). This reaction is light-independent. The NB-protein (BchN-BchB) is the catalytic component of the complex. In Dinoroseobacter shibae (strain DSM 16493 / NCIMB 14021 / DFL 12), this protein is Light-independent protochlorophyllide reductase subunit N.